Reading from the N-terminus, the 167-residue chain is Antibacterial peptide PMAP-37 (167 aa).

An N-terminal signal peptide occupies residues 1-29 (METQRASLCLGRWSLWLLLLALVVPSASA). The propeptide occupies 30–130 (QALSYREAVL…DITCNEIQSV (101 aa)). 2 cysteine pairs are disulfide-bonded: cysteine 85–cysteine 96 and cysteine 107–cysteine 124.

The protein belongs to the cathelicidin family.

It is found in the secreted. In terms of biological role, exerts antimicrobial activity against both Gram-positive and negative bacteria with minimal inhibitory concentrations ranging over 1-4 micro molar. Its activity appears to be mediated by its ability to damage bacterial membranes. This is Antibacterial peptide PMAP-37 (PMAP37) from Sus scrofa (Pig).